The following is a 310-amino-acid chain: Glutamyl-Q tRNA(Asp) synthetase (310 aa).

L-glutamate contacts are provided by residues 8–12 (RFAPS) and E44. Residues 11-21 (PSPTGPLHLGS) carry the 'HIGH' region motif. Zn(2+)-binding residues include C100, C102, Y123, and C127. 2 residues coordinate L-glutamate: Y183 and R201. Positions 239–243 (KLSKQ) match the 'KMSKS' region motif. K242 lines the ATP pocket.

It belongs to the class-I aminoacyl-tRNA synthetase family. GluQ subfamily. It depends on Zn(2+) as a cofactor.

Functionally, catalyzes the tRNA-independent activation of glutamate in presence of ATP and the subsequent transfer of glutamate onto a tRNA(Asp). Glutamate is transferred on the 2-amino-5-(4,5-dihydroxy-2-cyclopenten-1-yl) moiety of the queuosine in the wobble position of the QUC anticodon. This chain is Glutamyl-Q tRNA(Asp) synthetase, found in Cupriavidus metallidurans (strain ATCC 43123 / DSM 2839 / NBRC 102507 / CH34) (Ralstonia metallidurans).